The sequence spans 258 residues: Alpha-fibrinogenase (258 aa).

An N-terminal signal peptide occupies residues 1-18 (MVLIRVLANLVMLHLSYG). Residues 19-24 (EKSSEL) constitute a propeptide that is removed on maturation. Positions 25–249 (VIGGRPCNIN…YNDWIQSIIA (225 aa)) constitute a Peptidase S1 domain. Cystine bridges form between Cys-31–Cys-163, Cys-50–Cys-66, Cys-98–Cys-256, Cys-142–Cys-210, Cys-174–Cys-189, and Cys-200–Cys-225. Residue Asn-44 is glycosylated (N-linked (GlcNAc...) asparagine). Residue His-65 is the Charge relay system of the active site. 2 N-linked (GlcNAc...) asparagine glycosylation sites follow: Asn-79 and Asn-101. The Charge relay system role is filled by Asp-110. Ser-204 acts as the Charge relay system in catalysis.

The protein belongs to the peptidase S1 family. Snake venom subfamily. Monomer. Post-translationally, glycosylated. Contains 8.5% of hexoses, 5.8% of hexosamines and 0.8% of sialic acids. Expressed by the venom gland.

It is found in the secreted. With respect to regulation, inhibited by diisopropylfluorophosphate (DFP) and PMSF, and partially by soybean trypsin inhibitor, but not by EDTA. Its function is as follows. Degrades alpha chain of fibrinogen (FGA), and has strong caseinolytic activity. Cleaves oxidized insulin B-chain at '40-Tyr-|-Leu-41', '48-Phe-|-Phe-49' and '49-Phe-|-Tyr-50', and glucagon at the bonds '62-Tyr-|-Ser-63', 66-Leu-|-Asp-67' and '78-Leu-|-Met-79' bonds. This is Alpha-fibrinogenase from Macrovipera lebetinus (Levantine viper).